The sequence spans 269 residues: Glutamate 5-kinase (269 aa).

Lys-14 provides a ligand contact to ATP. Residues Ser-54, Asp-141, and Asn-157 each contribute to the substrate site. ATP-binding positions include 177–178 (SD) and 219–225 (TGGMVTK).

It belongs to the glutamate 5-kinase family.

It is found in the cytoplasm. The enzyme catalyses L-glutamate + ATP = L-glutamyl 5-phosphate + ADP. It participates in amino-acid biosynthesis; L-proline biosynthesis; L-glutamate 5-semialdehyde from L-glutamate: step 1/2. Functionally, catalyzes the transfer of a phosphate group to glutamate to form L-glutamate 5-phosphate. This chain is Glutamate 5-kinase, found in Clostridium perfringens (strain 13 / Type A).